The sequence spans 492 residues: NADH-quinone oxidoreductase subunit N (492 aa).

The next 14 helical transmembrane spans lie at 13-33 (MLPV…GFWL), 43-63 (ILFV…APWA), 82-102 (AALL…LVSL), 110-132 (VSFA…IAFS), 136-155 (IVML…LATL), 169-189 (FLLG…LYGA), 210-230 (IGIL…KIAL), 245-265 (PTLV…AGML), 272-292 (LAAG…TLVI), 306-326 (LLAY…LGDT), 331-351 (AALG…LAVV), 377-397 (AVAL…AGFF), 410-430 (GYLL…VYYL), and 457-477 (VAVA…NLWY).

The protein belongs to the complex I subunit 2 family. In terms of assembly, NDH-1 is composed of 15 different subunits. Subunits NuoA, H, J, K, L, M, N constitute the membrane sector of the complex.

Its subcellular location is the cell membrane. It carries out the reaction a quinone + NADH + 5 H(+)(in) = a quinol + NAD(+) + 4 H(+)(out). In terms of biological role, NDH-1 shuttles electrons from NADH, via FMN and iron-sulfur (Fe-S) centers, to quinones in the respiratory chain. The immediate electron acceptor for the enzyme in this species is believed to be a menaquinone. Couples the redox reaction to proton translocation (for every two electrons transferred, four hydrogen ions are translocated across the cytoplasmic membrane), and thus conserves the redox energy in a proton gradient. The chain is NADH-quinone oxidoreductase subunit N from Deinococcus radiodurans (strain ATCC 13939 / DSM 20539 / JCM 16871 / CCUG 27074 / LMG 4051 / NBRC 15346 / NCIMB 9279 / VKM B-1422 / R1).